The chain runs to 124 residues: Small ribosomal subunit protein uS12cy (124 aa).

Belongs to the universal ribosomal protein uS12 family. As to quaternary structure, part of the 30S ribosomal subunit.

It is found in the plastid. It localises to the chloroplast. Its function is as follows. With S4 and S5 plays an important role in translational accuracy. Located at the interface of the 30S and 50S subunits. The protein is Small ribosomal subunit protein uS12cy (rps12-B) of Olimarabidopsis pumila (Dwarf rocket).